The sequence spans 393 residues: Isocitrate dehydrogenase [NADP] (393 aa).

D-threo-isocitrate-binding residues include Ser-102, Asn-104, Arg-108, Arg-118, and Arg-142. Asp-283 lines the Mg(2+) pocket.

This sequence belongs to the isocitrate and isopropylmalate dehydrogenases family. In terms of assembly, homodimer. Mg(2+) is required as a cofactor. Requires Mn(2+) as cofactor.

The enzyme catalyses D-threo-isocitrate + NADP(+) = 2-oxoglutarate + CO2 + NADPH. Functionally, catalyzes the oxidative decarboxylation of isocitrate to 2-oxoglutarate and carbon dioxide with the concomitant reduction of NADP(+). The sequence is that of Isocitrate dehydrogenase [NADP] (icd) from Streptococcus mutans serotype c (strain ATCC 700610 / UA159).